The chain runs to 352 residues: GTPase Obg (352 aa).

The region spanning 1–159 (MHFLDQAKIF…MYVWLRLKLL (159 aa)) is the Obg domain. Positions 122–142 (DGGRGNASYKTSTNRAPRQHG) are disordered. The 169-residue stretch at 160–328 (ADAGLVGLPN…LLDAVLEYLP (169 aa)) folds into the OBG-type G domain. Residues 166–173 (GLPNAGKS), 191–195 (FTTLR), 212–215 (DIPG), 280–283 (NKID), and 309–311 (SGA) contribute to the GTP site. Positions 173 and 193 each coordinate Mg(2+).

Belongs to the TRAFAC class OBG-HflX-like GTPase superfamily. OBG GTPase family. As to quaternary structure, monomer. Mg(2+) is required as a cofactor.

It is found in the cytoplasm. Its function is as follows. An essential GTPase which binds GTP, GDP and possibly (p)ppGpp with moderate affinity, with high nucleotide exchange rates and a fairly low GTP hydrolysis rate. Plays a role in control of the cell cycle, stress response, ribosome biogenesis and in those bacteria that undergo differentiation, in morphogenesis control. This Novosphingobium aromaticivorans (strain ATCC 700278 / DSM 12444 / CCUG 56034 / CIP 105152 / NBRC 16084 / F199) protein is GTPase Obg.